Reading from the N-terminus, the 201-residue chain is Ribosomal RNA large subunit methyltransferase E (201 aa).

S-adenosyl-L-methionine contacts are provided by Gly-49, Trp-51, Asp-69, Asp-87, and Asp-111. Lys-151 (proton acceptor) is an active-site residue.

The protein belongs to the class I-like SAM-binding methyltransferase superfamily. RNA methyltransferase RlmE family.

Its subcellular location is the cytoplasm. It catalyses the reaction uridine(2552) in 23S rRNA + S-adenosyl-L-methionine = 2'-O-methyluridine(2552) in 23S rRNA + S-adenosyl-L-homocysteine + H(+). Its function is as follows. Specifically methylates the uridine in position 2552 of 23S rRNA at the 2'-O position of the ribose in the fully assembled 50S ribosomal subunit. The sequence is that of Ribosomal RNA large subunit methyltransferase E from Nitratidesulfovibrio vulgaris (strain DSM 19637 / Miyazaki F) (Desulfovibrio vulgaris).